The sequence spans 309 residues: Porphobilinogen deaminase (309 aa).

Cysteine 242 carries the post-translational modification S-(dipyrrolylmethanemethyl)cysteine.

This sequence belongs to the HMBS family. As to quaternary structure, monomer. Requires dipyrromethane as cofactor.

It carries out the reaction 4 porphobilinogen + H2O = hydroxymethylbilane + 4 NH4(+). It participates in porphyrin-containing compound metabolism; protoporphyrin-IX biosynthesis; coproporphyrinogen-III from 5-aminolevulinate: step 2/4. In terms of biological role, tetrapolymerization of the monopyrrole PBG into the hydroxymethylbilane pre-uroporphyrinogen in several discrete steps. The protein is Porphobilinogen deaminase of Legionella pneumophila (strain Paris).